Reading from the N-terminus, the 289-residue chain is 3-hydroxy-16-methoxy-2,3-dihydrotabersonine N-methyltransferase (289 aa).

The segment at 71–80 (MLDVGSGLGG) is SAM motif I. Residues 134–142 (GKFDVVFTI) form an SAM motif II region. The tract at residues 161 to 170 (VAAPGAAIII) is SAM motif III. The short motif at 287 to 289 (KSI) is the Microbody targeting signal element.

The protein belongs to the class I-like SAM-binding methyltransferase superfamily. gTMT family. As to quaternary structure, homodimer. In terms of tissue distribution, mainly expressed in young leaves, and, to a lower extent, in mature leaves, flowers, stems and roots (at protein level).

Its subcellular location is the thylakoid. It localises to the peroxisome. It catalyses the reaction (3R)-3-hydroxy-16-methoxy-2,3-dihydrotabersonine + S-adenosyl-L-methionine = deacetoxyvindoline + S-adenosyl-L-homocysteine + H(+). It functions in the pathway alkaloid biosynthesis; vindoline biosynthesis. With respect to regulation, inhibited by gamma-tocopherol. Functionally, S-adenosyl-L-methionine-dependent N-methyltransferase that catalyzes a nitrogen methylation involved in vindoline biosynthesis. Displays a strict requirement for a 2,3-dihydro bond in the aspidosperma skeleton. Can use 2,3-dihydrotabersonine, 2,3-dihydro-3-hydroxytabersonine and 2,3,6,7-tetraydro-3-hydroxytabersonine as substrates, but not tabersonine, vincadifformine, 21-hydroxycyclolochnericine, tryptamine, norharmane, harmaline, catharanthine, norajmaline, ajmaline, serpentine, ajmalicine, yohimbine or gamma-tocopherol. Inactive with picrinine as substrate. This is 3-hydroxy-16-methoxy-2,3-dihydrotabersonine N-methyltransferase from Catharanthus roseus (Madagascar periwinkle).